Here is a 130-residue protein sequence, read N- to C-terminus: Small ribosomal subunit protein uS9 (130 aa).

The protein belongs to the universal ribosomal protein uS9 family.

The sequence is that of Small ribosomal subunit protein uS9 from Bacillus cytotoxicus (strain DSM 22905 / CIP 110041 / 391-98 / NVH 391-98).